The following is a 312-amino-acid chain: Coiled-coil domain-containing protein 42 homolog (312 aa).

Coiled-coil stretches lie at residues 34 to 121 and 172 to 233; these read RLLE…RLKE and ATHQ…WESQ.

Belongs to the CFAP73 family.

The protein is Coiled-coil domain-containing protein 42 homolog of Nematostella vectensis (Starlet sea anemone).